The following is a 312-amino-acid chain: GATA zinc finger domain-containing protein 20 (312 aa).

Disordered regions lie at residues 1–45 (MGKR…PQQP) and 213–232 (TIGS…TNTN). Over residues 29 to 45 (QQQQQQQEQQPQQPQQP) the composition is skewed to low complexity. The GATA-type zinc-finger motif lies at 260-287 (CYVCGVTETPYWRRGTDEGVMVDLCNAC).

This chain is GATA zinc finger domain-containing protein 20 (gtaT), found in Dictyostelium discoideum (Social amoeba).